A 235-amino-acid chain; its full sequence is 7-cyano-7-deazaguanine synthase (235 aa).

Position 7-17 (7-17 (CSGGLDSVSLA)) interacts with ATP. Positions 185, 193, 196, and 199 each coordinate Zn(2+).

This sequence belongs to the QueC family. Zn(2+) serves as cofactor.

The enzyme catalyses 7-carboxy-7-deazaguanine + NH4(+) + ATP = 7-cyano-7-deazaguanine + ADP + phosphate + H2O + H(+). Its pathway is purine metabolism; 7-cyano-7-deazaguanine biosynthesis. Catalyzes the ATP-dependent conversion of 7-carboxy-7-deazaguanine (CDG) to 7-cyano-7-deazaguanine (preQ(0)). The protein is 7-cyano-7-deazaguanine synthase of Allorhizobium ampelinum (strain ATCC BAA-846 / DSM 112012 / S4) (Agrobacterium vitis (strain S4)).